The primary structure comprises 177 residues: ADP-ribosylation factor-like protein 17 (177 aa).

Gly2 carries N-myristoyl glycine lipidation. Residues 24 to 31, 67 to 71, and 125 to 128 contribute to the GTP site; these read SLDTAGKT, DVGSH, and LPHS.

The protein belongs to the small GTPase superfamily. Arf family.

Its subcellular location is the golgi apparatus. Its function is as follows. GTP-binding protein that functions as an allosteric activator of the cholera toxin catalytic subunit, an ADP-ribosyltransferase. Involved in protein trafficking; may modulate vesicle budding and uncoating within the Golgi apparatus. The chain is ADP-ribosylation factor-like protein 17 (ARL17A) from Homo sapiens (Human).